The sequence spans 428 residues: Flotillin-2 (428 aa).

The N-myristoyl glycine moiety is linked to residue Gly2. Residue Cys4 is the site of S-palmitoyl cysteine; by ZDHHC5 attachment. Cys19 carries S-palmitoyl cysteine lipidation. Cys20 carries the S-palmitoyl cysteine; by ZDHHC5 lipid modification. Ser405 bears the Phosphoserine mark.

The protein belongs to the band 7/mec-2 family. Flotillin subfamily. As to quaternary structure, heterooligomeric complex of flotillin-1 and flotillin-2 and caveolin-1 and caveolin-2. Interacts with ECPAS. ZDHHC5-catalyzed palmitoylation may be required for the formation of higher-order complexes and for neurite outgrowth in cultured neural stem cells. In terms of tissue distribution, expressed in many tissues, including suprabasal epidermis, hair follicles, heart, lung, thymus, spleen, liver, kidney and brain. Not expressed in skeletal muscle.

It localises to the cell membrane. Its subcellular location is the membrane. It is found in the caveola. The protein resides in the endosome. In terms of biological role, may act as a scaffolding protein within caveolar membranes, functionally participating in formation of caveolae or caveolae-like vesicles. May be involved in epidermal cell adhesion and epidermal structure and function. This is Flotillin-2 (Flot2) from Mus musculus (Mouse).